A 474-amino-acid polypeptide reads, in one-letter code: tRNA-2-methylthio-N(6)-dimethylallyladenosine synthase (474 aa).

Positions 3-120 (KKLHIKTWGC…LPEMINQVKG (118 aa)) constitute an MTTase N-terminal domain. 6 residues coordinate [4Fe-4S] cluster: cysteine 12, cysteine 49, cysteine 83, cysteine 157, cysteine 161, and cysteine 164. Residues 143-375 (RAEGPTAFVS…QERINQQAMA (233 aa)) enclose the Radical SAM core domain. The region spanning 378-441 (RRMLGTTQRI…PNSLRGKVIR (64 aa)) is the TRAM domain.

It belongs to the methylthiotransferase family. MiaB subfamily. As to quaternary structure, monomer. It depends on [4Fe-4S] cluster as a cofactor.

The protein localises to the cytoplasm. It carries out the reaction N(6)-dimethylallyladenosine(37) in tRNA + (sulfur carrier)-SH + AH2 + 2 S-adenosyl-L-methionine = 2-methylsulfanyl-N(6)-dimethylallyladenosine(37) in tRNA + (sulfur carrier)-H + 5'-deoxyadenosine + L-methionine + A + S-adenosyl-L-homocysteine + 2 H(+). Catalyzes the methylthiolation of N6-(dimethylallyl)adenosine (i(6)A), leading to the formation of 2-methylthio-N6-(dimethylallyl)adenosine (ms(2)i(6)A) at position 37 in tRNAs that read codons beginning with uridine. The chain is tRNA-2-methylthio-N(6)-dimethylallyladenosine synthase from Cronobacter sakazakii (strain ATCC BAA-894) (Enterobacter sakazakii).